The chain runs to 337 residues: tRNA N6-adenosine threonylcarbamoyltransferase (337 aa).

Fe cation contacts are provided by histidine 111 and histidine 115. Residues 134-138, aspartate 167, glycine 180, and asparagine 272 contribute to the substrate site; that span reads LVSGG. A Fe cation-binding site is contributed by aspartate 300.

Belongs to the KAE1 / TsaD family. Requires Fe(2+) as cofactor.

It localises to the cytoplasm. The catalysed reaction is L-threonylcarbamoyladenylate + adenosine(37) in tRNA = N(6)-L-threonylcarbamoyladenosine(37) in tRNA + AMP + H(+). Required for the formation of a threonylcarbamoyl group on adenosine at position 37 (t(6)A37) in tRNAs that read codons beginning with adenine. Is involved in the transfer of the threonylcarbamoyl moiety of threonylcarbamoyl-AMP (TC-AMP) to the N6 group of A37, together with TsaE and TsaB. TsaD likely plays a direct catalytic role in this reaction. This chain is tRNA N6-adenosine threonylcarbamoyltransferase, found in Shewanella sediminis (strain HAW-EB3).